An 89-amino-acid chain; its full sequence is Large ribosomal subunit protein bL27 (89 aa).

Residues 1 to 21 (MAHKKAGGSSRNGRDSKGKRL) form a disordered region.

It belongs to the bacterial ribosomal protein bL27 family.

The protein is Large ribosomal subunit protein bL27 of Bradyrhizobium sp. (strain ORS 278).